The primary structure comprises 650 residues: MMGIGKNTTSKSMEAGSSTEGKYEDEAKHPAFFTLPVVINGGATSSGEQDNEDTELMAIYTTENGIAEKSSLAETLDSTGSLDPQRSDMIYTIEDVPPWYLCIFLGLQHYLTCFSGTIAVPFLLADAMCVGYDQWATSQLIGTIFFCVGITTLLQTTFGCRLPLFQASAFAFLAPARAILSLDKWKCNTTDVSVANGTAELLHTEHIWYPRIREIQGAIIMSSLIEVVIGLLGLPGALLKYIGPLTITPTVALIGLSGFQAAGERAGKHWGIAMLTIFLVLLFSQYARNVKFPLPIYKSKKGWTAYKLQLFKMFPIILAILVSWLLCFIFTVTDVFPPDSTKYGFYARTDARQGVLLVAPWFKVPYPFQWGLPTVSAAGVIGMLSAVVASIIESIGDYYACARLSCAPPPPIHAINRGIFVEGLSCVLDGIFGTGNGSTSSSPNIGVLGITKVGSRRVIQCGAALMLALGMIGKFSALFASLPDPVLGALFCTLFGMITAVGLSNLQFIDLNSSRNLFVLGFSIFFGLVLPSYLRQNPLVTGITGIDQVLNVLLTTAMFVGGCVAFILDNTIPGTPEERGIRKWKKGVGKGNKSLDGMESYNLPFGMNIIKKYRCFSYLPISPTFVGYTWKGLRKSDNSRSSDEDSQATG.

Positions 1–20 (MMGIGKNTTSKSMEAGSSTE) are enriched in polar residues. A disordered region spans residues 1–21 (MMGIGKNTTSKSMEAGSSTEG). Residues 9 to 110 (TSKSMEAGSS…LCIFLGLQHY (102 aa)) are Cytoplasmic-facing. Ser-70 is modified (phosphoserine). A Phosphothreonine modification is found at Thr-75. Ser-78 bears the Phosphoserine mark. Thr-79 bears the Phosphothreonine mark. At Ser-81 the chain carries Phosphoserine. The helical transmembrane segment at 111–131 (LTCFSGTIAVPFLLADAMCVG) threads the bilayer. At 132–139 (YDQWATSQ) the chain is on the extracellular side. Residues 140–160 (LIGTIFFCVGITTLLQTTFGC) form a helical membrane-spanning segment. Position 161 (Arg-161) is a topological domain, cytoplasmic. A helical transmembrane segment spans residues 162–182 (LPLFQASAFAFLAPARAILSL). Residues 183–218 (DKWKCNTTDVSVANGTAELLHTEHIWYPRIREIQGA) lie on the Extracellular side of the membrane. N-linked (GlcNAc...) asparagine glycans are attached at residues Asn-188 and Asn-196. Residues 219-239 (IIMSSLIEVVIGLLGLPGALL) form a helical membrane-spanning segment. Residues 240–266 (KYIGPLTITPTVALIGLSGFQAAGERA) are Cytoplasmic-facing. A helical membrane pass occupies residues 267 to 284 (GKHWGIAMLTIFLVLLFS). The Extracellular portion of the chain corresponds to 285 to 288 (QYAR). An intramembrane region (helical) is located at residues 289-302 (NVKFPLPIYKSKKG). The Extracellular segment spans residues 303–309 (WTAYKLQ). The helical transmembrane segment at 310-330 (LFKMFPIILAILVSWLLCFIF) threads the bilayer. Residues 331–371 (TVTDVFPPDSTKYGFYARTDARQGVLLVAPWFKVPYPFQWG) are Cytoplasmic-facing. The chain crosses the membrane as a helical span at residues 372–392 (LPTVSAAGVIGMLSAVVASII). The Extracellular segment spans residues 393–417 (ESIGDYYACARLSCAPPPPIHAINR). The chain crosses the membrane as a helical span at residues 418-438 (GIFVEGLSCVLDGIFGTGNGS). The Cytoplasmic segment spans residues 439–461 (TSSSPNIGVLGITKVGSRRVIQC). A helical transmembrane segment spans residues 462 to 482 (GAALMLALGMIGKFSALFASL). The Extracellular segment spans residues 483 to 485 (PDP). The helical transmembrane segment at 486–506 (VLGALFCTLFGMITAVGLSNL) threads the bilayer. Over 507 to 516 (QFIDLNSSRN) the chain is Cytoplasmic. A helical membrane pass occupies residues 517 to 537 (LFVLGFSIFFGLVLPSYLRQN). Residues 538-547 (PLVTGITGID) are Extracellular-facing. The chain crosses the membrane as a helical span at residues 548 to 568 (QVLNVLLTTAMFVGGCVAFIL). At 569–650 (DNTIPGTPEE…SSDEDSQATG (82 aa)) the chain is on the cytoplasmic side. Phosphothreonine is present on Thr-649.

This sequence belongs to the nucleobase:cation symporter-2 (NCS2) (TC 2.A.40) family. Interacts with CLSTN3. Post-translationally, phosphorylated. As to expression, ubiquitous.

Its subcellular location is the cell membrane. The enzyme catalyses L-ascorbate(out) + 2 Na(+)(out) = L-ascorbate(in) + 2 Na(+)(in). Functionally, sodium/ascorbate cotransporter. Mediates electrogenic uptake of vitamin C, with a stoichiometry of 2 Na(+) for each ascorbate. In Homo sapiens (Human), this protein is Solute carrier family 23 member 2 (SLC23A2).